A 555-amino-acid polypeptide reads, in one-letter code: Glutamate--tRNA ligase (555 aa).

A 'HIGH' region motif is present at residues 103 to 113 (PNPSGPLHIGH).

This sequence belongs to the class-I aminoacyl-tRNA synthetase family. Glutamate--tRNA ligase type 2 subfamily.

The protein localises to the cytoplasm. It carries out the reaction tRNA(Glu) + L-glutamate + ATP = L-glutamyl-tRNA(Glu) + AMP + diphosphate. Its function is as follows. Catalyzes the attachment of glutamate to tRNA(Glu) in a two-step reaction: glutamate is first activated by ATP to form Glu-AMP and then transferred to the acceptor end of tRNA(Glu). The protein is Glutamate--tRNA ligase of Methanobrevibacter smithii (strain ATCC 35061 / DSM 861 / OCM 144 / PS).